A 222-amino-acid chain; its full sequence is Ribosomal RNA large subunit methyltransferase E (222 aa).

Residues glycine 64, tryptophan 66, aspartate 92, aspartate 108, and aspartate 133 each contribute to the S-adenosyl-L-methionine site. Lysine 173 acts as the Proton acceptor in catalysis.

This sequence belongs to the class I-like SAM-binding methyltransferase superfamily. RNA methyltransferase RlmE family.

Its subcellular location is the cytoplasm. It carries out the reaction uridine(2552) in 23S rRNA + S-adenosyl-L-methionine = 2'-O-methyluridine(2552) in 23S rRNA + S-adenosyl-L-homocysteine + H(+). Functionally, specifically methylates the uridine in position 2552 of 23S rRNA at the 2'-O position of the ribose in the fully assembled 50S ribosomal subunit. This chain is Ribosomal RNA large subunit methyltransferase E, found in Variovorax paradoxus (strain S110).